The sequence spans 386 residues: 8-amino-7-oxononanoate synthase (386 aa).

R20 contributes to the substrate binding site. 107–108 provides a ligand contact to pyridoxal 5'-phosphate; the sequence is GY. H132 lines the substrate pocket. Residues S178, H206, and T234 each coordinate pyridoxal 5'-phosphate. N6-(pyridoxal phosphate)lysine is present on K237. T351 lines the substrate pocket.

The protein belongs to the class-II pyridoxal-phosphate-dependent aminotransferase family. BioF subfamily. Homodimer. It depends on pyridoxal 5'-phosphate as a cofactor.

It catalyses the reaction 6-carboxyhexanoyl-[ACP] + L-alanine + H(+) = (8S)-8-amino-7-oxononanoate + holo-[ACP] + CO2. It functions in the pathway cofactor biosynthesis; biotin biosynthesis. Its function is as follows. Catalyzes the decarboxylative condensation of pimeloyl-[acyl-carrier protein] and L-alanine to produce 8-amino-7-oxononanoate (AON), [acyl-carrier protein], and carbon dioxide. The sequence is that of 8-amino-7-oxononanoate synthase from Aromatoleum aromaticum (strain DSM 19018 / LMG 30748 / EbN1) (Azoarcus sp. (strain EbN1)).